The sequence spans 422 residues: GTPase Obg (422 aa).

The Obg domain occupies 1–158; it reads MFYDRARIFV…RWLDLELKLL (158 aa). Positions 159–329 constitute an OBG-type G domain; the sequence is ADVGLVGFPN…LVYRVSALLE (171 aa). Residues 165-172, 190-194, 212-215, 282-285, and 310-312 contribute to the GTP site; these read GFPNAGKS, FTTIT, DIPG, NKMD, and SAV. 2 residues coordinate Mg(2+): serine 172 and threonine 192. The region spanning 337–422 is the OCT domain; the sequence is VPEALERPVI…IGDYEFEYVE (86 aa).

Belongs to the TRAFAC class OBG-HflX-like GTPase superfamily. OBG GTPase family. In terms of assembly, monomer. Requires Mg(2+) as cofactor.

It is found in the cytoplasm. Functionally, an essential GTPase which binds GTP, GDP and possibly (p)ppGpp with moderate affinity, with high nucleotide exchange rates and a fairly low GTP hydrolysis rate. Plays a role in control of the cell cycle, stress response, ribosome biogenesis and in those bacteria that undergo differentiation, in morphogenesis control. The polypeptide is GTPase Obg (Pelotomaculum thermopropionicum (strain DSM 13744 / JCM 10971 / SI)).